Here is a 187-residue protein sequence, read N- to C-terminus: Elongation factor P (187 aa).

The protein belongs to the elongation factor P family.

The protein localises to the cytoplasm. It participates in protein biosynthesis; polypeptide chain elongation. Involved in peptide bond synthesis. Stimulates efficient translation and peptide-bond synthesis on native or reconstituted 70S ribosomes in vitro. Probably functions indirectly by altering the affinity of the ribosome for aminoacyl-tRNA, thus increasing their reactivity as acceptors for peptidyl transferase. The sequence is that of Elongation factor P from Acidothermus cellulolyticus (strain ATCC 43068 / DSM 8971 / 11B).